A 290-amino-acid polypeptide reads, in one-letter code: Porphobilinogen deaminase (290 aa).

S-(dipyrrolylmethanemethyl)cysteine is present on C237.

The protein belongs to the HMBS family. As to quaternary structure, monomer. Dipyrromethane is required as a cofactor.

The catalysed reaction is 4 porphobilinogen + H2O = hydroxymethylbilane + 4 NH4(+). Its pathway is porphyrin-containing compound metabolism; protoporphyrin-IX biosynthesis; coproporphyrinogen-III from 5-aminolevulinate: step 2/4. Functionally, tetrapolymerization of the monopyrrole PBG into the hydroxymethylbilane pre-uroporphyrinogen in several discrete steps. This chain is Porphobilinogen deaminase, found in Clostridium kluyveri (strain NBRC 12016).